A 47-amino-acid chain; its full sequence is Protein YtiD (47 aa).

This Escherichia coli (strain K12) protein is Protein YtiD (ytiD).